A 513-amino-acid chain; its full sequence is Microtubule-associated protein 70-5 (513 aa).

Disordered regions lie at residues methionine 1 to lysine 20, lysine 60 to glutamate 81, phenylalanine 347 to threonine 367, and alanine 393 to asparagine 413. The segment covering valine 9–glutamine 18 has biased composition (polar residues). The stretch at serine 10 to aspartate 322 forms a coiled coil. The span at lysine 60–glutamate 80 shows a compositional bias: basic and acidic residues. Residues phenylalanine 190–histidine 400 are required for targeting to microtubules. A coiled-coil region spans residues aspartate 426 to lysine 501.

The protein belongs to the MAP70 family. In terms of assembly, interacts with MAP70.1 and itself.

The protein localises to the cytoplasm. It localises to the cytoskeleton. Its function is as follows. Plant-specific protein that interact with microtubules and regulates microtubule dynamics. May play a role in anisotropic cell expansion and organ growth. In association with MAP70.1, is essential for the normal banding pattern of secondary cell wall and for the proper development of xylem tracheary elements and wood formation. This chain is Microtubule-associated protein 70-5 (MAP70.5), found in Arabidopsis thaliana (Mouse-ear cress).